Reading from the N-terminus, the 488-residue chain is Prostaglandin E2 receptor EP4 subtype (488 aa).

Over 1 to 19 the chain is Extracellular; sequence MSTPVANASASSMPELLNN. The N-linked (GlcNAc...) asparagine glycan is linked to N7. Residues 20-43 traverse the membrane as a helical segment; it reads PVTIPAVMFIFGVVGNLVAIVVLC. Residues 44–55 are Cytoplasmic-facing; it reads KSRKEQKETTFY. A helical transmembrane segment spans residues 56 to 79; that stretch reads TLVCGLAVTDLLGTLLVSPVTIAT. Residues 80 to 96 are Extracellular-facing; sequence YMKGQWPGGQALCDYST. C92 and C170 are oxidised to a cystine. A helical transmembrane segment spans residues 97-115; sequence FILLFFGLSGLSIICAMSI. The Cytoplasmic segment spans residues 116–135; the sequence is ERYLAINHAYFYSHYVDKRL. The chain crosses the membrane as a helical span at residues 136–160; that stretch reads AGLTLFAVYASNVLFCALPNMGLGR. The Extracellular portion of the chain corresponds to 161–184; sequence SRLQFPDTWCFIDWRTNVTAHAAF. N177 carries an N-linked (GlcNAc...) asparagine glycan. The helical transmembrane segment at 185-211 threads the bilayer; sequence SYMYAGFSSFLILATVLCNVLVCGALL. Residues 212 to 270 are Cytoplasmic-facing; it reads RMHRQFMRRTSLGTEQHHAAAAAAVTSAACRGHPTASPALPRLSDFRRRRSFRRIAGAE. A helical transmembrane segment spans residues 271–298; the sequence is IQMVILLIATSLVVLICSIPLVVRVFIN. Topologically, residues 299-315 are extracellular; it reads QLYQPDLVREISQNPDL. A helical transmembrane segment spans residues 316 to 335; sequence QAIRIASVNPILDPWIYILL. Over 336–488 the chain is Cytoplasmic; that stretch reads RKTVLSKAIE…ETLNLSEKCI (153 aa). Over residues 358-371 the composition is skewed to basic and acidic residues; it reads RRDRSGQHCSDSRR. The tract at residues 358–381 is disordered; sequence RRDRSGQHCSDSRRTSSAMSTHSR. Residues 372 to 381 show a composition bias toward polar residues; the sequence is TSSAMSTHSR. Phosphoserine is present on residues S377, S380, S382, and S385. Residues 456–475 are disordered; it reads EVGGGGRAGPTPKGSSLQVT.

It belongs to the G-protein coupled receptor 1 family. As to quaternary structure, interacts with FEM1A. Phosphorylation mediates agonist-mediated desensitization by promoting cytoplasmic retention. In terms of tissue distribution, highly expressed in intestine, duodenal epithelium, uterus, thymus and adrenal cortex. Lower but significant expression in whole adrenal, lung, spleen, stomach, and kidney. In this latter organ, the receptor is localized in the glomeruli and the transitional epithelium of the renal calyx.

It is found in the cell membrane. Functionally, receptor for prostaglandin E2 (PGE2). The activity of this receptor is mediated by G(s) proteins that stimulate adenylate cyclase. Has a relaxing effect on smooth muscle. May play an important role in regulating renal hemodynamics, intestinal epithelial transport, adrenal aldosterone secretion, and uterine function. The polypeptide is Prostaglandin E2 receptor EP4 subtype (PTGER4) (Oryctolagus cuniculus (Rabbit)).